Here is a 495-residue protein sequence, read N- to C-terminus: Protein nucleotidyltransferase YdiU (495 aa).

ATP-binding residues include Gly-92, Gly-94, Arg-95, Lys-114, Asp-126, Gly-127, Arg-177, and Arg-184. The active-site Proton acceptor is the Asp-261. 2 residues coordinate Mg(2+): Asn-262 and Asp-271. Asp-271 provides a ligand contact to ATP.

It belongs to the SELO family. Requires Mg(2+) as cofactor. The cofactor is Mn(2+).

It carries out the reaction L-seryl-[protein] + ATP = 3-O-(5'-adenylyl)-L-seryl-[protein] + diphosphate. The catalysed reaction is L-threonyl-[protein] + ATP = 3-O-(5'-adenylyl)-L-threonyl-[protein] + diphosphate. It catalyses the reaction L-tyrosyl-[protein] + ATP = O-(5'-adenylyl)-L-tyrosyl-[protein] + diphosphate. The enzyme catalyses L-histidyl-[protein] + UTP = N(tele)-(5'-uridylyl)-L-histidyl-[protein] + diphosphate. It carries out the reaction L-seryl-[protein] + UTP = O-(5'-uridylyl)-L-seryl-[protein] + diphosphate. The catalysed reaction is L-tyrosyl-[protein] + UTP = O-(5'-uridylyl)-L-tyrosyl-[protein] + diphosphate. Functionally, nucleotidyltransferase involved in the post-translational modification of proteins. It can catalyze the addition of adenosine monophosphate (AMP) or uridine monophosphate (UMP) to a protein, resulting in modifications known as AMPylation and UMPylation. This is Protein nucleotidyltransferase YdiU from Bordetella bronchiseptica (strain ATCC BAA-588 / NCTC 13252 / RB50) (Alcaligenes bronchisepticus).